Here is a 652-residue protein sequence, read N- to C-terminus: DNA ligase (652 aa).

NAD(+) is bound by residues 29–33, 78–79, and Glu-107; these read DSDYD and SL. The active-site N6-AMP-lysine intermediate is Lys-109. Residues Arg-130, Glu-164, Lys-278, and Lys-302 each coordinate NAD(+). Zn(2+) is bound by residues Cys-395, Cys-398, Cys-413, and Cys-418. A BRCT domain is found at 577–652; sequence NSDAALFGLT…IEDEDWLRQL (76 aa).

The protein belongs to the NAD-dependent DNA ligase family. LigA subfamily. Mg(2+) is required as a cofactor. It depends on Mn(2+) as a cofactor.

It catalyses the reaction NAD(+) + (deoxyribonucleotide)n-3'-hydroxyl + 5'-phospho-(deoxyribonucleotide)m = (deoxyribonucleotide)n+m + AMP + beta-nicotinamide D-nucleotide.. In terms of biological role, DNA ligase that catalyzes the formation of phosphodiester linkages between 5'-phosphoryl and 3'-hydroxyl groups in double-stranded DNA using NAD as a coenzyme and as the energy source for the reaction. It is essential for DNA replication and repair of damaged DNA. This chain is DNA ligase, found in Streptococcus pyogenes serotype M3 (strain ATCC BAA-595 / MGAS315).